Here is a 217-residue protein sequence, read N- to C-terminus: Probable GTP-binding protein EngB (217 aa).

Positions 24–207 (SQPEICFAGR…HELIESWLIP (184 aa)) constitute an EngB-type G domain. Residues 32 to 39 (GRSNAGKS), 59 to 63 (GRTQH), 81 to 84 (DLPG), 148 to 151 (TKCD), and 185 to 188 (LFSA) each bind GTP. Mg(2+)-binding residues include Ser-39 and Thr-61.

The protein belongs to the TRAFAC class TrmE-Era-EngA-EngB-Septin-like GTPase superfamily. EngB GTPase family. Mg(2+) is required as a cofactor.

Its function is as follows. Necessary for normal cell division and for the maintenance of normal septation. This Paraburkholderia phytofirmans (strain DSM 17436 / LMG 22146 / PsJN) (Burkholderia phytofirmans) protein is Probable GTP-binding protein EngB.